Reading from the N-terminus, the 411-residue chain is Imidazolonepropionase (411 aa).

His78 and His80 together coordinate Fe(3+). His78 and His80 together coordinate Zn(2+). 4-imidazolone-5-propanoate is bound by residues Arg87, Tyr150, and His183. Tyr150 provides a ligand contact to N-formimidoyl-L-glutamate. A Fe(3+)-binding site is contributed by His248. His248 lines the Zn(2+) pocket. Gln251 serves as a coordination point for 4-imidazolone-5-propanoate. Asp322 provides a ligand contact to Fe(3+). Residue Asp322 coordinates Zn(2+). 2 residues coordinate N-formimidoyl-L-glutamate: Asn324 and Gly326. Thr327 provides a ligand contact to 4-imidazolone-5-propanoate.

Belongs to the metallo-dependent hydrolases superfamily. HutI family. Zn(2+) serves as cofactor. Requires Fe(3+) as cofactor.

It localises to the cytoplasm. It carries out the reaction 4-imidazolone-5-propanoate + H2O = N-formimidoyl-L-glutamate. It participates in amino-acid degradation; L-histidine degradation into L-glutamate; N-formimidoyl-L-glutamate from L-histidine: step 3/3. Functionally, catalyzes the hydrolytic cleavage of the carbon-nitrogen bond in imidazolone-5-propanoate to yield N-formimidoyl-L-glutamate. It is the third step in the universal histidine degradation pathway. In Flavobacterium psychrophilum (strain ATCC 49511 / DSM 21280 / CIP 103535 / JIP02/86), this protein is Imidazolonepropionase.